A 171-amino-acid chain; its full sequence is Large ribosomal subunit protein uL10 (171 aa).

The protein belongs to the universal ribosomal protein uL10 family. As to quaternary structure, part of the ribosomal stalk of the 50S ribosomal subunit. The N-terminus interacts with L11 and the large rRNA to form the base of the stalk. The C-terminus forms an elongated spine to which L12 dimers bind in a sequential fashion forming a multimeric L10(L12)X complex.

Forms part of the ribosomal stalk, playing a central role in the interaction of the ribosome with GTP-bound translation factors. This is Large ribosomal subunit protein uL10 from Nitrosomonas eutropha (strain DSM 101675 / C91 / Nm57).